We begin with the raw amino-acid sequence, 551 residues long: Protein MTL1 (551 aa).

A signal peptide spans 1 to 35 (MASCNPTRKKSSASSLSMWRTILMALTTLPLSVLS). Residues 36-361 (QELVPANSTT…HSGLSKKNRN (326 aa)) lie on the Extracellular side of the membrane. 3 disordered regions span residues 108-143 (MQVS…IISS), 206-227 (PSSS…SYSS), and 243-263 (SSSS…SSSS). Residues 362-382 (IIIGCVVGIGAPLILILLILI) form a helical membrane-spanning segment. At 383 to 551 (YMFCVQPKKT…PNNGLNITNY (169 aa)) the chain is on the cytoplasmic side. The segment at 429-513 (SSDSPIGSNN…SNSNSQDYND (85 aa)) is disordered. Positions 430-441 (SDSPIGSNNIQN) are enriched in polar residues. Over residues 466–477 (GYDDDDDDDAND) the composition is skewed to acidic residues. Ser-481 and Ser-482 each carry phosphoserine. A compositionally biased stretch (low complexity) spans 498–508 (SASYSMSNSNS).

The protein belongs to the MID2 like cell wall stress sensor family.

Its subcellular location is the membrane. Involved in cell integrity signaling during vegetative growth at elevated temperature. Acts positively on the PKC1-MAPK pathway. Cell membrane sensor of oxidative stress in the cell integrity pathway upstream of PKC1. Required to transmit the oxidative signal to SLT2 and to restore the correct actin organization following oxidative stress. Multicopy suppressor of 1,3-beta-glucan synthase (GS) mutation. Also suppresses RGD1 null mutations. This Saccharomyces cerevisiae (strain ATCC 204508 / S288c) (Baker's yeast) protein is Protein MTL1 (MTL1).